A 130-amino-acid polypeptide reads, in one-letter code: Small ribosomal subunit protein uS11 (130 aa).

This sequence belongs to the universal ribosomal protein uS11 family. As to quaternary structure, part of the 30S ribosomal subunit. Interacts with proteins S7 and S18. Binds to IF-3.

Functionally, located on the platform of the 30S subunit, it bridges several disparate RNA helices of the 16S rRNA. Forms part of the Shine-Dalgarno cleft in the 70S ribosome. This is Small ribosomal subunit protein uS11 from Nautilia profundicola (strain ATCC BAA-1463 / DSM 18972 / AmH).